The primary structure comprises 723 residues: Probable inactive serine/threonine-protein kinase fnkD (723 aa).

The Protein kinase domain occupies 33–276; it reads WEIITQLESN…TTSLPKYSTL (244 aa). FNIP repeat units lie at residues 301–342, 343–384, 385–426, 524–565, 566–606, and 647–690; these read FNQP…ELAS, FNQT…LLSS, FNQP…SLAS, FNQS…ILPS, FNHP…LGDE, and FNIE…FGIT.

This sequence belongs to the protein kinase superfamily. STE Ser/Thr protein kinase family.

In Dictyostelium discoideum (Social amoeba), this protein is Probable inactive serine/threonine-protein kinase fnkD (fnkD-1).